The chain runs to 183 residues: MNLRIGEGWDVHALVPGRRLVIGGVELEHPMGLGLLGHSDADVLLHAITDALLGAAALGDIGRHFPDTDAAFRAADSRLLLAEAARRVRAAGYEIGNIDSTVVAQAPRLAAHIPAMRLAIARALGVDQGQVNVKAKTAEGLGPVGQNLAIEARAVALICATPGAGAIGPAAQRVSSAWSGSGA.

Residues Asp10 and His12 each contribute to the a divalent metal cation site. Residues 10-12 (DVH) and 38-39 (HS) each bind 4-CDP-2-C-methyl-D-erythritol 2-phosphate. His46 lines the a divalent metal cation pocket. 4-CDP-2-C-methyl-D-erythritol 2-phosphate is bound by residues 60–62 (DIG) and 65–69 (FPDTD).

The protein belongs to the IspF family. As to quaternary structure, homotrimer. Requires a divalent metal cation as cofactor.

It catalyses the reaction 4-CDP-2-C-methyl-D-erythritol 2-phosphate = 2-C-methyl-D-erythritol 2,4-cyclic diphosphate + CMP. It participates in isoprenoid biosynthesis; isopentenyl diphosphate biosynthesis via DXP pathway; isopentenyl diphosphate from 1-deoxy-D-xylulose 5-phosphate: step 4/6. In terms of biological role, involved in the biosynthesis of isopentenyl diphosphate (IPP) and dimethylallyl diphosphate (DMAPP), two major building blocks of isoprenoid compounds. Catalyzes the conversion of 4-diphosphocytidyl-2-C-methyl-D-erythritol 2-phosphate (CDP-ME2P) to 2-C-methyl-D-erythritol 2,4-cyclodiphosphate (ME-CPP) with a corresponding release of cytidine 5-monophosphate (CMP). In Verminephrobacter eiseniae (strain EF01-2), this protein is 2-C-methyl-D-erythritol 2,4-cyclodiphosphate synthase.